The chain runs to 510 residues: Mitogen-activated protein kinase 9 (510 aa).

Residues 23-314 (YQIQEVIGKG…AEEALADPYF (292 aa)) enclose the Protein kinase domain. ATP contacts are provided by residues 29-37 (IGKGSYGVV) and lysine 52. Aspartate 149 functions as the Proton acceptor in the catalytic mechanism. Threonine 185 carries the phosphothreonine modification. A TXY motif is present at residues 185 to 187 (TDY). A Phosphotyrosine modification is found at tyrosine 187. Residue threonine 190 is modified to Phosphothreonine. Residues 393-461 (NYGKGEKGSP…SDYRNGTSQT (69 aa)) form a disordered region. The segment covering 410–431 (LPRERVPAPKKENGSHNHDIEN) has biased composition (basic and acidic residues). A compositionally biased stretch (polar residues) spans 433–461 (SIASLVTTLESPPTSQHEGSDYRNGTSQT).

Belongs to the protein kinase superfamily. CMGC Ser/Thr protein kinase family. MAP kinase subfamily. In terms of processing, dually phosphorylated on Thr-185 and Tyr-187, which activates the enzyme.

The enzyme catalyses L-seryl-[protein] + ATP = O-phospho-L-seryl-[protein] + ADP + H(+). It catalyses the reaction L-threonyl-[protein] + ATP = O-phospho-L-threonyl-[protein] + ADP + H(+). Its activity is regulated as follows. Activated by threonine and tyrosine phosphorylation. The polypeptide is Mitogen-activated protein kinase 9 (MPK9) (Arabidopsis thaliana (Mouse-ear cress)).